The primary structure comprises 306 residues: Homeobox protein HMX3 (306 aa).

The segment at 95 to 181 is disordered; that stretch reads HTPRTEVPDK…DKKPCRKKKT (87 aa). 2 stretches are compositionally biased toward basic and acidic residues: residues 117-143 and 153-174; these read GERDSPEPIHPLKAELEAKDSESKSPE and EEGKKDDSGEDWKKREESPDKK. Residues 178-237 constitute a DNA-binding region (homeobox); sequence KKKTRTVFSRSQVFQLESTFDMKRYLSSSERAGLAASLHLTETQVKIWFQNRRNKWKRQL.

It belongs to the HMX homeobox family.

It is found in the nucleus. Its function is as follows. Transcription factor involved in specification of neuronal cell types and which is required for inner ear and hypothalamus development. Binds to the 5'-CAAGTG-3' core sequence. May act as a stage-specific inhibitor of anf1 in the anterior neural plate during the development. This is Homeobox protein HMX3 (hmx3) from Xenopus tropicalis (Western clawed frog).